The sequence spans 375 residues: Anhydro-N-acetylmuramic acid kinase (375 aa).

Residue Gly12–Asp19 coordinates ATP.

This sequence belongs to the anhydro-N-acetylmuramic acid kinase family.

The catalysed reaction is 1,6-anhydro-N-acetyl-beta-muramate + ATP + H2O = N-acetyl-D-muramate 6-phosphate + ADP + H(+). The protein operates within amino-sugar metabolism; 1,6-anhydro-N-acetylmuramate degradation. It functions in the pathway cell wall biogenesis; peptidoglycan recycling. In terms of biological role, catalyzes the specific phosphorylation of 1,6-anhydro-N-acetylmuramic acid (anhMurNAc) with the simultaneous cleavage of the 1,6-anhydro ring, generating MurNAc-6-P. Is required for the utilization of anhMurNAc either imported from the medium or derived from its own cell wall murein, and thus plays a role in cell wall recycling. The protein is Anhydro-N-acetylmuramic acid kinase of Photobacterium profundum (strain SS9).